The chain runs to 264 residues: Nicotinamide N-methyltransferase (264 aa).

Residues tyrosine 20, tyrosine 25, glycine 63, tyrosine 69, aspartate 85, and asparagine 90 each contribute to the S-adenosyl-L-methionine site. Arginine 132 bears the Citrulline; alternate mark. Residues 142–143 (DV) and threonine 163 contribute to the S-adenosyl-L-methionine site. Nicotinamide-binding residues include aspartate 197 and serine 213.

The protein belongs to the class I-like SAM-binding methyltransferase superfamily. NNMT/PNMT/TEMT family. In terms of assembly, monomer. Deiminated by PADI1 and PADI2.

It localises to the cytoplasm. The catalysed reaction is nicotinamide + S-adenosyl-L-methionine = 1-methylnicotinamide + S-adenosyl-L-homocysteine. It functions in the pathway cofactor metabolism. It participates in amino-acid degradation. Catalyzes the N-methylation of nicotinamide using the universal methyl donor S-adenosyl-L-methionine to form N1-methylnicotinamide and S-adenosyl-L-homocysteine, a predominant nicotinamide/vitamin B3 clearance pathway. Plays a central role in regulating cellular methylation potential, by consuming S-adenosyl-L-methionine and limiting its availability for other methyltransferases. Actively mediates genome-wide epigenetic and transcriptional changes through hypomethylation of repressive chromatin marks, such as H3K27me3. In a developmental context, contributes to low levels of the repressive histone marks that characterize pluripotent embryonic stem cell pre-implantation state. Acts as a metabolic regulator primarily on white adipose tissue energy expenditure as well as hepatic gluconeogenesis and cholesterol biosynthesis. In white adipocytes, regulates polyamine flux by consuming S-adenosyl-L-methionine which provides for propylamine group in polyamine biosynthesis, whereas by consuming nicotinamide controls NAD(+) levels through the salvage pathway. Via its product N1-methylnicotinamide regulates protein acetylation in hepatocytes, by repressing the ubiquitination and increasing the stability of SIRT1 deacetylase. Can also N-methylate other pyridines structurally related to nicotinamide and play a role in xenobiotic detoxification. The protein is Nicotinamide N-methyltransferase (NNMT) of Sus scrofa (Pig).